A 715-amino-acid polypeptide reads, in one-letter code: MSLELEWMPIEDLKLPSNVIEIIKKRGIKKLNPPQTEAVKKGLLEGNRLLLTSPTGSGKTLIAEMGIISFLLKNGGKAIYVTPLRALTNEKYLTFKDWELIGFKVAMTSGDYDTDDAWLKNYDIIITTYEKLDSLWRHRPEWLNEVNYFVLDELHYLNDPERGPVVESVTIRAKRRNLLALSATISNYKQIAKWLGAEPVATNWRPVPLIEGVIYPERKKKEYNVIFKDNTTKKVHGDDAIIAYTLDSLSKNGQVLVFRNSRKMAESTALKIANYMNFVSLDENALSEILKQLDDIEEGGSDEKELLKSLISKGVAYHHAGLSKALRDLIEEGFRQRKIKVIVATPTLAAGVNLPARTVIIGDIYRFNKKIAGYYDEIPIMEYKQMSGRAGRPGFDQIGESIVVVRDKEDVDRVFKKYVLSDVEPIESKLGSERAFYTFLLGILSAEGNLSEKQLENFAYESLLAKQLVDVYFDRAIRWLLEHSFIKEEGNTFALTNFGKRVADLYINPFTADIIRKGLEGHKASCELAYLHLLAFTPDGPLVSVGRNEEEELIELLEDLDCELLIEEPYEEDEYSLYINALKVALIMKDWMDEVDEDTILSKYNIGSGDLRNMVETMDWLTYSAYHLSRELKLNEHADKLRILNLRVRDGIKEELLELVQISGVGRKRARLLYNNGIKELGDVVMNPDKVKNLLGQKLGEKVVQEAARLLNRFH.

A Q motif motif is present at residues Met8–Thr36. Residues Gln35 and Ser53–Thr60 each bind ATP. One can recognise a Helicase ATP-binding domain in the interval Lys40–Asn203. Residues Asp152–His155 carry the DEAH box motif. Positions His236–Gly442 constitute a Helicase C-terminal domain.

Belongs to the helicase family. Hel308 subfamily. Monomer.

The catalysed reaction is Couples ATP hydrolysis with the unwinding of duplex DNA by translocating in the 3'-5' direction.. It catalyses the reaction ATP + H2O = ADP + phosphate + H(+). Functionally, DNA-dependent ATPase and 3'-5' DNA helicase that may be involved in repair of stalled replication forks. A low processivity 3'-5' helicase. Unwinds short dsDNA substrates with 3'-overhangs (25 bp dsDNA with 25 base overhang), less active on longer dsDNA substrates. Also unwinds the lagging strand of a stalled replication fork (but the leading strand was not tested). Binds ssDNA, but dsDNA about 35-fold less well. Able to displace streptavidin from biotinylated ssDNA, which is partially inhibited by DNA-binding proteins, suggesting it may play a role in stripping proteins from stalled replication forks. The sequence is that of ATP-dependent DNA helicase Hel308 from Saccharolobus solfataricus (strain 98/2) (Sulfolobus solfataricus).